The following is a 420-amino-acid chain: Acetyl-CoA acetyltransferase, mitochondrial (420 aa).

The N-terminal 33 residues, 1 to 33 (MAFCGPRTAARLSHSTRALHYTHRGHVSQRTLN), are a transit peptide targeting the mitochondrion. Cys-119 (acyl-thioester intermediate) is an active-site residue. CoA is bound by residues Tyr-212, 251–253 (RVD), and Lys-256. Tyr-212 contributes to the K(+) binding site. 3 residues coordinate K(+): Ala-273, Ala-274, and Ala-276. Position 277 (Ser-277) interacts with CoA. Residue Val-374 coordinates K(+). Residue Cys-406 is the Proton donor/acceptor of the active site.

The protein belongs to the thiolase-like superfamily. Thiolase family. As to quaternary structure, homotetramer.

The protein localises to the mitochondrion. It catalyses the reaction 2 acetyl-CoA = acetoacetyl-CoA + CoA. The catalysed reaction is propanoyl-CoA + acetyl-CoA = 2-methyl-3-oxobutanoyl-CoA + CoA. It participates in lipid metabolism; fatty acid beta-oxidation. This is one of the enzymes that catalyzes the last step of the mitochondrial beta-oxidation pathway, an aerobic process breaking down fatty acids into acetyl-CoA. Using free coenzyme A/CoA, catalyzes the thiolytic cleavage of medium- to long-chain 3-oxoacyl-CoAs into acetyl-CoA and a fatty acyl-CoA shortened by two carbon atoms. The activity of the enzyme is reversible and it can also catalyze the condensation of two acetyl-CoA molecules into acetoacetyl-CoA. Thereby, it plays a major role in ketone body metabolism. The protein is Acetyl-CoA acetyltransferase, mitochondrial (acat1) of Xenopus tropicalis (Western clawed frog).